Reading from the N-terminus, the 501-residue chain is Acetylcholine receptor subunit beta (501 aa).

The N-terminal stretch at 1–23 (MALGALLLILGILGTPLAPGARG) is a signal peptide. The Extracellular portion of the chain corresponds to 24–244 (SEAEGQLLKK…VIFYLIIRRK (221 aa)). Cys151 and Cys165 are oxidised to a cystine. An N-linked (GlcNAc...) asparagine glycan is attached at Asn164. A run of 3 helical transmembrane segments spans residues 245-269 (PLFYLVNVIAPCILITLLAIFVFYL), 277-295 (MGLSIFALLTLTVFLLLLA), and 311-332 (YLMFTMILVTFSVILSVVVLNL). The Cytoplasmic portion of the chain corresponds to 333–469 (HHRSPHTHQM…WQFVAMVVDR (137 aa)). Positions 362–381 (RPKPERDQLPEPHHSFSPRS) are disordered. The span at 363–375 (PKPERDQLPEPHH) shows a compositional bias: basic and acidic residues. Position 390 is a phosphotyrosine; by Tyr-kinases (Tyr390). Residues 470-488 (LFLWTFIVFTSVGTLVIFL) traverse the membrane as a helical segment.

The protein belongs to the ligand-gated ion channel (TC 1.A.9) family. Acetylcholine receptor (TC 1.A.9.1) subfamily. Beta-1/CHRNB1 sub-subfamily. Pentamer of two alpha chains, and one each of the beta, delta, and gamma (in immature muscle) or epsilon (in mature muscle) chains. The muscle heteropentamer composed of alpha-1, beta-1, delta, epsilon subunits interacts with the alpha-conotoxin ImII.

It is found in the postsynaptic cell membrane. Its subcellular location is the cell membrane. It catalyses the reaction K(+)(in) = K(+)(out). The enzyme catalyses Na(+)(in) = Na(+)(out). After binding acetylcholine, the AChR responds by an extensive change in conformation that affects all subunits and leads to opening of an ion-conducting channel across the plasma membrane. The protein is Acetylcholine receptor subunit beta (Chrnb1) of Rattus norvegicus (Rat).